Consider the following 205-residue polypeptide: Thiamine-phosphate synthase (205 aa).

Residues 34 to 38 (QLRCK) and asparagine 66 contribute to the 4-amino-2-methyl-5-(diphosphooxymethyl)pyrimidine site. Mg(2+) is bound by residues aspartate 67 and aspartate 86. Serine 105 lines the 4-amino-2-methyl-5-(diphosphooxymethyl)pyrimidine pocket. 131–133 (TTT) lines the 2-[(2R,5Z)-2-carboxy-4-methylthiazol-5(2H)-ylidene]ethyl phosphate pocket. Position 134 (lysine 134) interacts with 4-amino-2-methyl-5-(diphosphooxymethyl)pyrimidine. A 2-[(2R,5Z)-2-carboxy-4-methylthiazol-5(2H)-ylidene]ethyl phosphate-binding site is contributed by glycine 163.

This sequence belongs to the thiamine-phosphate synthase family. Mg(2+) is required as a cofactor.

It carries out the reaction 2-[(2R,5Z)-2-carboxy-4-methylthiazol-5(2H)-ylidene]ethyl phosphate + 4-amino-2-methyl-5-(diphosphooxymethyl)pyrimidine + 2 H(+) = thiamine phosphate + CO2 + diphosphate. The enzyme catalyses 2-(2-carboxy-4-methylthiazol-5-yl)ethyl phosphate + 4-amino-2-methyl-5-(diphosphooxymethyl)pyrimidine + 2 H(+) = thiamine phosphate + CO2 + diphosphate. It catalyses the reaction 4-methyl-5-(2-phosphooxyethyl)-thiazole + 4-amino-2-methyl-5-(diphosphooxymethyl)pyrimidine + H(+) = thiamine phosphate + diphosphate. Its pathway is cofactor biosynthesis; thiamine diphosphate biosynthesis; thiamine phosphate from 4-amino-2-methyl-5-diphosphomethylpyrimidine and 4-methyl-5-(2-phosphoethyl)-thiazole: step 1/1. Its function is as follows. Condenses 4-methyl-5-(beta-hydroxyethyl)thiazole monophosphate (THZ-P) and 2-methyl-4-amino-5-hydroxymethyl pyrimidine pyrophosphate (HMP-PP) to form thiamine monophosphate (TMP). The sequence is that of Thiamine-phosphate synthase from Neisseria meningitidis serogroup B (strain ATCC BAA-335 / MC58).